Consider the following 213-residue polypeptide: UPF0301 protein RPC_0788 (213 aa).

Residues 1-20 (MDPKSKAPKRDETKGADDAS) form a disordered region.

This sequence belongs to the UPF0301 (AlgH) family.

The sequence is that of UPF0301 protein RPC_0788 from Rhodopseudomonas palustris (strain BisB18).